The sequence spans 199 residues: Pectinesterase inhibitor 4 (199 aa).

A signal peptide spans 1–25 (MLRFVVLSLTLMVFINSSNFPKTAA). N-linked (GlcNAc...) asparagine glycosylation is found at asparagine 16, asparagine 33, asparagine 43, and asparagine 83. A disulfide bridge connects residues cysteine 42 and cysteine 51. Cysteine 109 and cysteine 158 are oxidised to a cystine.

It belongs to the PMEI family. Binds reversibly to PME3 to inhibit its activity; the stability of the PME3-PMEI4 complex and the inhibition of the pectin methylesterase (PME) activity is pH-dependent, based on protonation status of amino-acids at the complex interface. In terms of tissue distribution, expressed in outer cell layer of roots, particularly in the root-hair zone. Expressed in roots and siliques.

The protein localises to the secreted. It localises to the extracellular space. It is found in the apoplast. Pectin methylesterase (PME) inhibitor that can target the root-expressed PME17 and PME3 in a pH-dependent manner, mainly in slightly acidic conditions (pH 6.3 and 5.0) but not at pH 7.5; this processus relies on changes in the protonation of amino acids involved in intermolecular and intramolecular interactions. Regulate de-methylesterification of pectins in roots and affects root growth. This is Pectinesterase inhibitor 4 from Arabidopsis thaliana (Mouse-ear cress).